The following is a 66-amino-acid chain: Phylloseptin-S6 (66 aa).

The first 22 residues, 1–22 (MAFLKKSLFLVLFLGLVSLSIC), serve as a signal peptide directing secretion. Residues 23–46 (EEEKRETEEEEHDQEEDDKSEEKR) constitute a propeptide that is removed on maturation. The tract at residues 25 to 44 (EKRETEEEEHDQEEDDKSEE) is disordered. A compositionally biased stretch (acidic residues) spans 30 to 41 (EEEEHDQEEDDK). Leucine 65 is modified (leucine amide).

Belongs to the frog skin active peptide (FSAP) family. Phylloseptin subfamily. As to expression, expressed by the skin glands.

It localises to the secreted. The protein localises to the target cell membrane. Its function is as follows. Antimicrobial peptide with high activity against Gram-positive bacteria, low activity against Gram-negative bacteria, and moderate activity against fungi. Acts by causing bacterial membrane disruption inducing leakage of the intracellular content followed by cell death. It adopts an alpha-helical amphipathic structure in membrane environments. Also shows highly potent antiparasitic activity against Leishmania species. Shows moderate hemolytic activity on human erythrocytes. Is also active on human monocytes. The chain is Phylloseptin-S6 from Phyllomedusa sauvagei (Sauvage's leaf frog).